Consider the following 882-residue polypeptide: Dual specificity tyrosine-phosphorylation-regulated kinase mbk-1 (882 aa).

A compositionally biased stretch (polar residues) spans 1–42; sequence MNTADVPDNLQSWGQQPSSSYSNTQQHSQMTNLPPINHNNLC. Disordered regions lie at residues 1-45, 62-81, 212-239, and 255-308; these read MNTA…CDTE, QKQQKQQEQQHIQQQNAQRF, KQVRRDRHKSQDAGKPKGSKDGSGASLT, and NHYQ…NGYD. Low complexity predominate over residues 64-79; sequence QQKQQEQQHIQQQNAQ. The span at 220–231 shows a compositional bias: basic and acidic residues; sequence KSQDAGKPKGSK. Over residues 290-308 the composition is skewed to low complexity; sequence QQQQRQKSSRGGPYNNGYD. The 322-residue stretch at 328-649 folds into the Protein kinase domain; that stretch reads ILSDTPVGKG…PYYVVRHPFL (322 aa). Residues 334 to 342 and lysine 357 each bind ATP; that span reads VGKGSFGQV. The active-site Proton acceptor is aspartate 456. 2 disordered regions span residues 742-761 and 789-882; these read HNPNYQYSQPQQQQQQQYQQ and QQQQ…NNKL. Low complexity-rich tracts occupy residues 747 to 761 and 789 to 810; these read QYSQPQQQQQQQYQQ and QQQQQQRQHMPQAQSSSQQHLQ. Over residues 816-827 the composition is skewed to basic and acidic residues; the sequence is RQQDQNEWRNQF. Residues 843–869 show a composition bias toward polar residues; the sequence is SVSNQISRNQFNPQQVSMTHGNVNANN.

The protein belongs to the protein kinase superfamily. CMGC Ser/Thr protein kinase family. MNB/DYRK subfamily. Mg(2+) serves as cofactor. As to expression, expressed in all somatic cells.

The protein resides in the nucleus. It catalyses the reaction L-seryl-[protein] + ATP = O-phospho-L-seryl-[protein] + ADP + H(+). It carries out the reaction L-threonyl-[protein] + ATP = O-phospho-L-threonyl-[protein] + ADP + H(+). The enzyme catalyses L-tyrosyl-[protein] + ATP = O-phospho-L-tyrosyl-[protein] + ADP + H(+). In terms of biological role, possible role in the function of olfactory neurons. This chain is Dual specificity tyrosine-phosphorylation-regulated kinase mbk-1, found in Caenorhabditis elegans.